A 267-amino-acid polypeptide reads, in one-letter code: 4-hydroxy-tetrahydrodipicolinate reductase (267 aa).

NAD(+)-binding positions include 8-13 (GAAGRM) and Asp-34. An NADP(+)-binding site is contributed by Arg-35. Residues 98-100 (GTT) and 122-125 (AANF) each bind NAD(+). Catalysis depends on His-155, which acts as the Proton donor/acceptor. His-156 serves as a coordination point for (S)-2,3,4,5-tetrahydrodipicolinate. Lys-159 serves as the catalytic Proton donor. (S)-2,3,4,5-tetrahydrodipicolinate is bound at residue 165–166 (GT).

This sequence belongs to the DapB family.

The protein localises to the cytoplasm. The enzyme catalyses (S)-2,3,4,5-tetrahydrodipicolinate + NAD(+) + H2O = (2S,4S)-4-hydroxy-2,3,4,5-tetrahydrodipicolinate + NADH + H(+). It catalyses the reaction (S)-2,3,4,5-tetrahydrodipicolinate + NADP(+) + H2O = (2S,4S)-4-hydroxy-2,3,4,5-tetrahydrodipicolinate + NADPH + H(+). Its pathway is amino-acid biosynthesis; L-lysine biosynthesis via DAP pathway; (S)-tetrahydrodipicolinate from L-aspartate: step 4/4. Functionally, catalyzes the conversion of 4-hydroxy-tetrahydrodipicolinate (HTPA) to tetrahydrodipicolinate. In Pseudomonas putida (strain ATCC 47054 / DSM 6125 / CFBP 8728 / NCIMB 11950 / KT2440), this protein is 4-hydroxy-tetrahydrodipicolinate reductase.